The sequence spans 392 residues: uncharacterized protein (392 aa).

Belongs to the mimivirus L17x/L18x family.

This is an uncharacterized protein from Acanthamoeba polyphaga (Amoeba).